Here is a 1322-residue protein sequence, read N- to C-terminus: Chitin synthase chs-1 (1322 aa).

The Extracellular portion of the chain corresponds to 1-39 (MNDGENYWNAFRSHKRSATDGPTLSPWMVTVLQATKLLL). Residues 40-60 (FALCNIVLTLGSVFSKLIVLI) form a helical membrane-spanning segment. The Cytoplasmic portion of the chain corresponds to 61 to 128 (MATNIVPRAH…KGQCGQLVKS (68 aa)). The chain crosses the membrane as a helical span at residues 129–149 (VVVLESLRAIGLAVLSFHVFP). Residues 150–156 (QLDLARC) lie on the Extracellular side of the membrane. Residues 157-177 (LVLSACFPLVAVLQRSLVAMV) traverse the membrane as a helical segment. Topologically, residues 178–193 (SAARTGRSFRNRLGRC) are cytoplasmic. A helical membrane pass occupies residues 194–214 (FVAIPHVIMFLVLMSSCYVWA). Residues 215 to 221 (LFDNKFT) are Extracellular-facing. The chain crosses the membrane as a helical span at residues 222–242 (AIIALPIGVICTSAGFWESWI). The Cytoplasmic portion of the chain corresponds to 243–269 (DTTHSGTSFDELYRLKYAVRKMNTTTK). A helical transmembrane segment spans residues 270-290 (LIVSLMRIVCTVSVLVSAVYI). Residues 291 to 316 (NDHKKLNSSHFVKAFFSFSTRQPHTR) lie on the Extracellular side of the membrane. N-linked (GlcNAc...) asparagine glycosylation occurs at asparagine 297. The chain crosses the membrane as a helical span at residues 317 to 337 (LLLLATGIIVLHFVMRGISRF). Topologically, residues 338-342 (LAALD) are cytoplasmic. A helical transmembrane segment spans residues 343–363 (LHPFSFVHPLSIAPLIAYGYV). Topologically, residues 364 to 396 (RYACQSPTCSIARRLARFGLHWVCDQWFQSARG) are extracellular. A helical membrane pass occupies residues 397 to 417 (IASPDFYICLIWLLVGCYRGW). The Cytoplasmic segment spans residues 418–836 (RLVRQRYFDT…AISYAYIAYQ (419 aa)). Residues 455 to 486 (LNRQEKTMLTEEEDISDENDELRIRNDEVDRV) adopt a coiled-coil conformation. The helical transmembrane segment at 837–857 (FLVIFFSMLGPAIIFTMLVFA) threads the bilayer. Residues 858–865 (QVAAFELR) are Extracellular-facing. Residues 866-886 (GSDVMLYNGIPIGFFIVLCFT) traverse the membrane as a helical segment. Over 887 to 892 (TESNIQ) the chain is Cytoplasmic. Residues 893–913 (LIYAKYMSIAYAFVMLAVLVA) form a helical membrane-spanning segment. The Extracellular portion of the chain corresponds to 914 to 922 (TSSQIVLET). Residues 923–943 (VLAPTSLFIVTMVGIFFFAAC) form a helical membrane-spanning segment. Residues 944–951 (LHPKEFTN) are Cytoplasmic-facing. Residues 952–972 (IIHGVVFFLMIPSTYVFLTLY) traverse the membrane as a helical segment. Residues 973–1148 (SLINLNVITW…AVAEGLASLR (176 aa)) are Extracellular-facing. Residues 1019-1053 (ISCREKKEHEERREKMEKKMQRMELALRSIESGAD) adopt a coiled-coil conformation. A helical transmembrane segment spans residues 1149 to 1169 (NQIAFTILLVNSLLALAIFLI). The Cytoplasmic portion of the chain corresponds to 1170-1209 (QKHKNVLSIKFSPIKNFRWTKMNEMTGQYEETDEPLKIDP). The helical transmembrane segment at 1210–1230 (LGMGIVVFLLIILFVQTLGML) threads the bilayer. The Extracellular portion of the chain corresponds to 1231–1322 (LHRLNTMIGA…MQRSALSTTE (92 aa)).

The protein belongs to the chitin synthase family. Class IV subfamily.

The protein localises to the cell membrane. It catalyses the reaction [(1-&gt;4)-N-acetyl-beta-D-glucosaminyl](n) + UDP-N-acetyl-alpha-D-glucosamine = [(1-&gt;4)-N-acetyl-beta-D-glucosaminyl](n+1) + UDP + H(+). Its function is as follows. Essential for the embryonic synthesis of chitin, a component of the eggshell. The polypeptide is Chitin synthase chs-1 (Caenorhabditis elegans).